The primary structure comprises 226 residues: V-type proton ATPase subunit E 2 (226 aa).

The protein belongs to the V-ATPase E subunit family. V-ATPase is a heteromultimeric enzyme made up of two complexes: the ATP-hydrolytic V1 complex and the proton translocation V0 complex. The V1 complex consists of three catalytic AB heterodimers that form a heterohexamer, three peripheral stalks each consisting of EG heterodimers, one central rotor including subunits D and F, and the regulatory subunits C and H. The proton translocation complex V0 consists of the proton transport subunit a, a ring of proteolipid subunits c9c'', rotary subunit d, subunits e and f, and the accessory subunits ATP6AP1/Ac45 and ATP6AP2/PRR.

Functionally, subunit of the V1 complex of vacuolar(H+)-ATPase (V-ATPase), a multisubunit enzyme composed of a peripheral complex (V1) that hydrolyzes ATP and a membrane integral complex (V0) that translocates protons. V-ATPase is responsible for acidifying and maintaining the pH of intracellular compartments and in some cell types, is targeted to the plasma membrane, where it is responsible for acidifying the extracellular environment. The polypeptide is V-type proton ATPase subunit E 2 (ATP6V1E2) (Bos taurus (Bovine)).